Consider the following 272-residue polypeptide: Lyso-glycine lipid O-acyltransferase (272 aa).

Belongs to the O-acyltransferase GlsA family.

It carries out the reaction a lyso-glycine lipid + a fatty acyl-[ACP] = a glycine lipid + holo-[ACP]. The catalysed reaction is N-[(3R)-3-hydroxyhexadecanoyl]-glycine + hexadecanoyl-[ACP] = N-[(3R)-3-(hexadecanoyloxy)hexadecanoyl]-glycine + holo-[ACP]. It functions in the pathway lipid metabolism. Functionally, is involved in the production of glycine lipids (GL), which are phosphorus-free membrane lipids important for fitness during growth of the human gut bacterium B.thetaiotaomicron in vivo and in vitro. Catalyzes the second step of GL biosynthesis, i.e. the O-acylation of the hydroxyl group of lyso-glycine lipids, resulting in the production of the mature diacylated glycine lipids. The protein is Lyso-glycine lipid O-acyltransferase of Bacteroides thetaiotaomicron (strain ATCC 29148 / DSM 2079 / JCM 5827 / CCUG 10774 / NCTC 10582 / VPI-5482 / E50).